Here is a 566-residue protein sequence, read N- to C-terminus: Autophagy-related protein 22-1 (566 aa).

The chain crosses the membrane as a helical span at residues Y38–L58. N103 is a glycosylation site (N-linked (GlcNAc...) asparagine). The next 3 helical transmembrane spans lie at S110 to F130, A146 to L168, and S179 to A199. An N-linked (GlcNAc...) asparagine glycan is attached at N200. The next 8 membrane-spanning stretches (helical) occupy residues G242–F262, V278–L298, F351–L371, I382–W402, I416–I436, W451–A471, F488–V510, and A519–V539. Positions K547–E566 are disordered.

The protein belongs to the ATG22 family.

The protein resides in the vacuole membrane. Functionally, vacuolar effluxer which mediate the efflux of amino acids resulting from autophagic degradation. The release of autophagic amino acids allows the maintenance of protein synthesis and viability during nitrogen starvation. The polypeptide is Autophagy-related protein 22-1 (ATG22-1) (Phaeosphaeria nodorum (strain SN15 / ATCC MYA-4574 / FGSC 10173) (Glume blotch fungus)).